Reading from the N-terminus, the 32-residue chain is Enhancer of rudimentary homolog (32 aa).

Belongs to the E(R) family. As to quaternary structure, homodimer. Component of the methylosome, a 20S complex containing at least CLNS1A/pICln, PRMT5/SKB1, WDR77/MEP50, PRMT1 and ERH. Interacts with CHTOP.

The protein resides in the nucleus. Functionally, may have a role in the cell cycle. In terms of biological role, AP 3910 has antibacterial activity against B.megaterium. The polypeptide is Enhancer of rudimentary homolog (ERH) (Sus scrofa (Pig)).